The chain runs to 328 residues: DNA-directed RNA polymerase subunit alpha (328 aa).

The segment at 1–234 is alpha N-terminal domain (alpha-NTD); that stretch reads MQNSTTEFLK…DQMSIFADLQ (234 aa). Residues 248–328 form an alpha C-terminal domain (alpha-CTD) region; sequence IDPVLLRPVD…AWPPVGLEKP (81 aa).

It belongs to the RNA polymerase alpha chain family. In terms of assembly, homodimer. The RNAP catalytic core consists of 2 alpha, 1 beta, 1 beta' and 1 omega subunit. When a sigma factor is associated with the core the holoenzyme is formed, which can initiate transcription.

It carries out the reaction RNA(n) + a ribonucleoside 5'-triphosphate = RNA(n+1) + diphosphate. In terms of biological role, DNA-dependent RNA polymerase catalyzes the transcription of DNA into RNA using the four ribonucleoside triphosphates as substrates. The sequence is that of DNA-directed RNA polymerase subunit alpha from Neisseria meningitidis serogroup A / serotype 4A (strain DSM 15465 / Z2491).